The following is a 292-amino-acid chain: tRNA-cytidine(32) 2-sulfurtransferase (292 aa).

The PP-loop motif motif lies at 53 to 58; it reads SGGKDS. The [4Fe-4S] cluster site is built by Cys128, Cys131, and Cys219.

The protein belongs to the TtcA family. Homodimer. It depends on Mg(2+) as a cofactor. Requires [4Fe-4S] cluster as cofactor.

Its subcellular location is the cytoplasm. The enzyme catalyses cytidine(32) in tRNA + S-sulfanyl-L-cysteinyl-[cysteine desulfurase] + AH2 + ATP = 2-thiocytidine(32) in tRNA + L-cysteinyl-[cysteine desulfurase] + A + AMP + diphosphate + H(+). It functions in the pathway tRNA modification. Functionally, catalyzes the ATP-dependent 2-thiolation of cytidine in position 32 of tRNA, to form 2-thiocytidine (s(2)C32). The sulfur atoms are provided by the cysteine/cysteine desulfurase (IscS) system. The chain is tRNA-cytidine(32) 2-sulfurtransferase from Cereibacter sphaeroides (strain ATCC 17023 / DSM 158 / JCM 6121 / CCUG 31486 / LMG 2827 / NBRC 12203 / NCIMB 8253 / ATH 2.4.1.) (Rhodobacter sphaeroides).